The primary structure comprises 371 residues: Leu/Ile/Val-binding protein homolog 1 (371 aa).

The signal sequence occupies residues 1 to 23 (MRKTLFSGVALAAVIAFGGSAWA).

This sequence belongs to the leucine-binding protein family.

In terms of biological role, component of an amino-acid transport system. The polypeptide is Leu/Ile/Val-binding protein homolog 1 (Brucella suis biovar 1 (strain 1330)).